We begin with the raw amino-acid sequence, 201 residues long: Hydroxymethylphosphonate dioxygenase (201 aa).

6 residues coordinate Fe cation: H47, H71, D72, H94, H117, and D174.

Requires Fe(2+) as cofactor.

The enzyme catalyses hydroxymethylphosphonate + O2 = formate + phosphate + 2 H(+). It carries out the reaction (1R)-(2-amino-1-hydroxyethyl)phosphonate + O2 = glycine + phosphate + 2 H(+). The catalysed reaction is (1R)-(1-hydroxyethyl)phosphonate + O2 = acetate + phosphate + 2 H(+). Part of an oxidative pathway for utilization of methylphosphonic acid as a phosphate source. Catalyzes the oxidation of hydroxymethylphosphonic acid to produce formate and phosphate. Can also use (1R)-(2-amino-1-hydroxyethyl)phosphonic acid and (R)-1-hydroxyethylphosphonic acid with similar catalytic efficiency. The polypeptide is Hydroxymethylphosphonate dioxygenase (Gimesia maris (strain ATCC 29201 / DSM 8797 / 534-30) (Planctomyces maris)).